Reading from the N-terminus, the 139-residue chain is ATP synthase epsilon chain (139 aa).

This sequence belongs to the ATPase epsilon chain family. As to quaternary structure, F-type ATPases have 2 components, CF(1) - the catalytic core - and CF(0) - the membrane proton channel. CF(1) has five subunits: alpha(3), beta(3), gamma(1), delta(1), epsilon(1). CF(0) has three main subunits: a, b and c.

It localises to the cell inner membrane. In terms of biological role, produces ATP from ADP in the presence of a proton gradient across the membrane. In Pseudomonas putida (strain W619), this protein is ATP synthase epsilon chain.